A 231-amino-acid polypeptide reads, in one-letter code: 5'-methylthioadenosine/S-adenosylhomocysteine nucleosidase (231 aa).

Catalysis depends on E12, which acts as the Proton acceptor. Residues G78, V153, and 174–175 each bind substrate; that span reads ME. D198 acts as the Proton donor in catalysis.

Belongs to the PNP/UDP phosphorylase family. MtnN subfamily.

It carries out the reaction S-adenosyl-L-homocysteine + H2O = S-(5-deoxy-D-ribos-5-yl)-L-homocysteine + adenine. The enzyme catalyses S-methyl-5'-thioadenosine + H2O = 5-(methylsulfanyl)-D-ribose + adenine. The catalysed reaction is 5'-deoxyadenosine + H2O = 5-deoxy-D-ribose + adenine. It participates in amino-acid biosynthesis; L-methionine biosynthesis via salvage pathway; S-methyl-5-thio-alpha-D-ribose 1-phosphate from S-methyl-5'-thioadenosine (hydrolase route): step 1/2. In terms of biological role, catalyzes the irreversible cleavage of the glycosidic bond in both 5'-methylthioadenosine (MTA) and S-adenosylhomocysteine (SAH/AdoHcy) to adenine and the corresponding thioribose, 5'-methylthioribose and S-ribosylhomocysteine, respectively. Also cleaves 5'-deoxyadenosine, a toxic by-product of radical S-adenosylmethionine (SAM) enzymes, into 5-deoxyribose and adenine. The sequence is that of 5'-methylthioadenosine/S-adenosylhomocysteine nucleosidase from Aliivibrio fischeri (Vibrio fischeri).